We begin with the raw amino-acid sequence, 274 residues long: Large ribosomal subunit protein uL2 (274 aa).

The disordered stretch occupies residues 223 to 274 (VAMNPVDHPHGGGEGRTSGGRHPVTPWGVPTKGYKTRSNKRTDKYIVRRRNK).

Belongs to the universal ribosomal protein uL2 family. As to quaternary structure, part of the 50S ribosomal subunit. Forms a bridge to the 30S subunit in the 70S ribosome.

In terms of biological role, one of the primary rRNA binding proteins. Required for association of the 30S and 50S subunits to form the 70S ribosome, for tRNA binding and peptide bond formation. It has been suggested to have peptidyltransferase activity; this is somewhat controversial. Makes several contacts with the 16S rRNA in the 70S ribosome. The protein is Large ribosomal subunit protein uL2 of Shewanella oneidensis (strain ATCC 700550 / JCM 31522 / CIP 106686 / LMG 19005 / NCIMB 14063 / MR-1).